The following is a 132-amino-acid chain: Small ribosomal subunit protein uS8 (132 aa).

Belongs to the universal ribosomal protein uS8 family. As to quaternary structure, part of the 30S ribosomal subunit. Contacts proteins S5 and S12.

In terms of biological role, one of the primary rRNA binding proteins, it binds directly to 16S rRNA central domain where it helps coordinate assembly of the platform of the 30S subunit. This is Small ribosomal subunit protein uS8 from Xylella fastidiosa (strain M23).